The primary structure comprises 388 residues: Dual-specificity RNA methyltransferase RlmN (388 aa).

Glu109 acts as the Proton acceptor in catalysis. The region spanning 115–354 (EDDRATLCVS…TIVRKTRGDD (240 aa)) is the Radical SAM core domain. Cys122 and Cys359 form a disulfide bridge. [4Fe-4S] cluster-binding residues include Cys129, Cys133, and Cys136. Residues 183–184 (GE), Ser215, 237–239 (SLH), and Asn316 contribute to the S-adenosyl-L-methionine site. The active-site S-methylcysteine intermediate is Cys359.

This sequence belongs to the radical SAM superfamily. RlmN family. [4Fe-4S] cluster is required as a cofactor.

The protein resides in the cytoplasm. It catalyses the reaction adenosine(2503) in 23S rRNA + 2 reduced [2Fe-2S]-[ferredoxin] + 2 S-adenosyl-L-methionine = 2-methyladenosine(2503) in 23S rRNA + 5'-deoxyadenosine + L-methionine + 2 oxidized [2Fe-2S]-[ferredoxin] + S-adenosyl-L-homocysteine. The enzyme catalyses adenosine(37) in tRNA + 2 reduced [2Fe-2S]-[ferredoxin] + 2 S-adenosyl-L-methionine = 2-methyladenosine(37) in tRNA + 5'-deoxyadenosine + L-methionine + 2 oxidized [2Fe-2S]-[ferredoxin] + S-adenosyl-L-homocysteine. Functionally, specifically methylates position 2 of adenine 2503 in 23S rRNA and position 2 of adenine 37 in tRNAs. m2A2503 modification seems to play a crucial role in the proofreading step occurring at the peptidyl transferase center and thus would serve to optimize ribosomal fidelity. The chain is Dual-specificity RNA methyltransferase RlmN from Citrobacter koseri (strain ATCC BAA-895 / CDC 4225-83 / SGSC4696).